Reading from the N-terminus, the 345-residue chain is Inositol phosphoceramide mannosyltransferase 2 (345 aa).

Residues 4–24 form a helical membrane-spanning segment; the sequence is VIYKFAVFAAVNFFLMSSIVL. N55 carries N-linked (GlcNAc...) asparagine glycosylation. A helical transmembrane segment spans residues 220–240; sequence YWLPYLTIMLSTGPLSISFLW. N269 carries N-linked (GlcNAc...) asparagine glycosylation. Residues 296 to 316 traverse the membrane as a helical segment; it reads LAYVIVAGFCLYFILSYMFFS.

Belongs to the glycosyltransferase 32 family.

The protein localises to the golgi apparatus. It localises to the cis-Golgi network membrane. It is found in the trans-Golgi network membrane. With imt1 and imt3, is required for the synthesis of mannosyl phosphorylinositol ceramide (MIPC). Catalyzes the addition of mannosyl to phosphorylinositol ceramide (IPC). MIPC is essential for cell morphology, cell-surface distribution of ergosterol, localization for plasma-membrane transporters, and lipid-raft-mediated endocytosis of plasma membrane proteins to the vacuole. This is Inositol phosphoceramide mannosyltransferase 2 from Schizosaccharomyces pombe (strain 972 / ATCC 24843) (Fission yeast).